The primary structure comprises 897 residues: Patched domain-containing protein 1 (897 aa).

A helical transmembrane segment spans residues 25-45; sequence PVFFLTVPAVLTIIFGSTVLS. N-linked (GlcNAc...) asparagine glycans are attached at residues Asn-132, Asn-167, and Asn-179. 2 helical membrane passes run 271–291 and 306–326; these read GVLA…AATI and GLLG…IFFI. The SSD domain occupies 273-433; it reads LAKSEVLVSL…FSFYGSCLVF (161 aa). The N-linked (GlcNAc...) asparagine glycan is linked to Asn-332. Helical transmembrane passes span 335–355, 377–397, 414–434, and 506–526; these read LLGI…ELLA, VMVC…MGAS, VAVL…LVFA, and PFVV…CLQI. Asn-572 and Asn-603 each carry an N-linked (GlcNAc...) asparagine glycan. 3 helical membrane-spanning segments follow: residues 701–721, 727–747, and 754–774; these read PILT…FLVI, FWLI…MTLW, and ISIL…APHL. Residue Asn-803 is glycosylated (N-linked (GlcNAc...) asparagine). The next 2 membrane-spanning stretches (helical) occupy residues 806–826 and 831–851; these read CFVI…YTLF and LTAG…LTFF. The span at 856–866 shows a compositional bias: basic residues; the sequence is KRHKKKKRAKR. The interval 856–881 is disordered; sequence KRHKKKKRAKRKEREREREREREREE. Positions 867–881 are enriched in basic and acidic residues; the sequence is KEREREREREREREE.

This sequence belongs to the patched family.

The protein localises to the cell membrane. It is found in the cell projection. The protein resides in the dendritic spine. Its function is as follows. Can bind cholesterol in vitro. The protein is Patched domain-containing protein 1 (ptchd1) of Danio rerio (Zebrafish).